Reading from the N-terminus, the 469-residue chain is Trehalose-6-phosphate synthase (469 aa).

Arg-10 contributes to the D-glucose 6-phosphate binding site. 22–23 (GG) is a binding site for UDP-alpha-D-glucose. The D-glucose 6-phosphate site is built by Tyr-77 and Asp-131. UDP-alpha-D-glucose is bound by residues Arg-262 and Lys-267. Arg-300 contributes to the D-glucose 6-phosphate binding site. UDP-alpha-D-glucose is bound at residue 365 to 369 (LVAKE).

The protein belongs to the glycosyltransferase 20 family. In terms of assembly, homotetramer.

The catalysed reaction is D-glucose 6-phosphate + UDP-alpha-D-glucose = alpha,alpha-trehalose 6-phosphate + UDP + H(+). It functions in the pathway glycan biosynthesis; trehalose biosynthesis. Functionally, probably involved in the osmoprotection via the biosynthesis of trehalose. Catalyzes the transfer of glucose from UDP-alpha-D-glucose (UDP-Glc) to D-glucose 6-phosphate (Glc-6-P) to form trehalose-6-phosphate. Acts with retention of the anomeric configuration of the UDP-sugar donor. The chain is Trehalose-6-phosphate synthase from Sodalis glossinidius (strain morsitans).